A 41-amino-acid chain; its full sequence is Pi-stichotoxin-Hmg5c (41 aa).

3 disulfides stabilise this stretch: Cys-4–Cys-37, Cys-6–Cys-30, and Cys-20–Cys-38.

It belongs to the sea anemone type 3 (BDS) potassium channel toxin family.

It localises to the secreted. Its subcellular location is the nematocyst. Its function is as follows. Toxin with different activities on acid-sensing ion channels (ASIC) and nicotinic acetylcholine receptors. Is able to bind T.californica muscle-type nicotinic acetylcholine receptors (nAChR) (alpha-1-beta-1-delta-epsilon (CHRNA1-CHRNB1-CHRND-CHRNE)), and human alpha-7/CHRNA7 nicotinic acetylcholine receptors. Weakly and reversibly inhibits rat homomeric ASIC1 (isoform ASIC1a) (IC(50)=1.25 uM), while it potentiates rat homomeric ASIC3 (EC(50)=1.53 uM). Rat ASIC1a current inhibition is not complete, and reaches a maximum of 86% inhibition. On rat ASIC3, does not activate the channel itself, but produces a remarkable potentiation of the transient current resulting from the acidic pulse. At the maximal applied concentration, elicits responses that are twice as high as those produced by extracellular protons. Surprisingly, shows a different activity on human ASIC3. On the truncated human ASIC3 (ASIC3-D20), the toxin weakly inhibits the channel. Molecular modeling interaction with rat ASIC1a suggests that it hinders the collapse of acidic pockets and stabilizes nonconducting channels state. In vivo, causes an anxiolytic effect on mouse behavior. Also shows an analgesic activity in an acid-induced muscle pain model, and important anti-inflammatory effect in models of acute local inflammation. This Heteractis magnifica (Magnificent sea anemone) protein is Pi-stichotoxin-Hmg5c.